Here is a 318-residue protein sequence, read N- to C-terminus: NADH-ubiquinone oxidoreductase chain 1 (318 aa).

The next 8 helical transmembrane spans lie at 2–22, 69–89, 98–118, 140–160, 171–191, 222–242, 253–273, and 285–305; these read FMAN…FLTL, MLYL…WTPL, FNLG…SILW, ISYE…SGSF, HSWL…STLA, LFFM…TTIF, ETYS…FLWI, and LMHL…MWYI.

It belongs to the complex I subunit 1 family. As to quaternary structure, core subunit of respiratory chain NADH dehydrogenase (Complex I) which is composed of 45 different subunits.

The protein resides in the mitochondrion inner membrane. The catalysed reaction is a ubiquinone + NADH + 5 H(+)(in) = a ubiquinol + NAD(+) + 4 H(+)(out). Core subunit of the mitochondrial membrane respiratory chain NADH dehydrogenase (Complex I) which catalyzes electron transfer from NADH through the respiratory chain, using ubiquinone as an electron acceptor. Essential for the catalytic activity and assembly of complex I. The protein is NADH-ubiquinone oxidoreductase chain 1 (MT-ND1) of Saguinus leucopus (Silvery-brown bare-face tamarin).